The chain runs to 204 residues: MIEVRDLGVSRGGLPVLAGVNFALSGGEALVLRGPNGIGKTTLLRTLARLQLPLAGEILGDAEDIAYAAHADGVKLTLTVAENLSFWSRVFAGGDPAVAIAAFNLDALQHRPAGGLSAGQKRRLSLARLMVTGRRLWILDEPTVSLDAASVQLFASSIRAHLASGGAAIMATHIDLGIEGRVLDLGPFKAKLPALDAEDLGGFL.

Positions Ile2–Leu204 constitute an ABC transporter domain. Gly34–Thr41 is an ATP binding site.

It belongs to the ABC transporter superfamily. CcmA exporter (TC 3.A.1.107) family. The complex is composed of two ATP-binding proteins (CcmA) and two transmembrane proteins (CcmB).

It localises to the cell inner membrane. It carries out the reaction heme b(in) + ATP + H2O = heme b(out) + ADP + phosphate + H(+). Its function is as follows. Part of the ABC transporter complex CcmAB involved in the biogenesis of c-type cytochromes; once thought to export heme, this seems not to be the case, but its exact role is uncertain. Responsible for energy coupling to the transport system. In Ruegeria sp. (strain TM1040) (Silicibacter sp.), this protein is Cytochrome c biogenesis ATP-binding export protein CcmA.